The sequence spans 362 residues: Methylthioribose-1-phosphate isomerase (362 aa).

Substrate is bound by residues 49 to 51 (RGA), R89, and Q201. D242 (proton donor) is an active-site residue. 252 to 253 (NK) is a binding site for substrate.

It belongs to the eIF-2B alpha/beta/delta subunits family. MtnA subfamily.

The catalysed reaction is 5-(methylsulfanyl)-alpha-D-ribose 1-phosphate = 5-(methylsulfanyl)-D-ribulose 1-phosphate. It functions in the pathway amino-acid biosynthesis; L-methionine biosynthesis via salvage pathway; L-methionine from S-methyl-5-thio-alpha-D-ribose 1-phosphate: step 1/6. Its function is as follows. Catalyzes the interconversion of methylthioribose-1-phosphate (MTR-1-P) into methylthioribulose-1-phosphate (MTRu-1-P). The protein is Methylthioribose-1-phosphate isomerase of Leptospira borgpetersenii serovar Hardjo-bovis (strain JB197).